Reading from the N-terminus, the 382-residue chain is Trophoblast glycoprotein-like (382 aa).

A signal peptide spans 1-26 (MAPRAGQPGLQGLLLVAAALSQPAAP). Intrachain disulfides connect C27-C33 and C31-C43. The Extracellular segment spans residues 27 to 307 (CPFQCYCFGG…EAAGPELEAS (281 aa)). 5 LRR repeats span residues 57 to 80 (PPDARNLTIVGANLTVLRAAAFAG), 93 to 116 (LPLLSALRLTHNHIEVVEDGAFDG), 117 to 140 (LPSLAALDLSHNPLRALGGGAFRG), 171 to 194 (LAELRLLGLAGNALSRLPPAALRL), and 196 to 217 (RLEQLDVRLNALAGLDPDELRA). An N-linked (GlcNAc...) asparagine glycan is attached at N62. Cystine bridges form between C238/C264 and C240/C285. A helical transmembrane segment spans residues 308–328 (YVFFGLVLALIGLIFLMVLYL). Residues 329-382 (NRRGIQRWMRNLREACRDQMEGYHYRYEQDADPRRAPAPAAPAGSRATSPGSGL) lie on the Cytoplasmic side of the membrane. The segment at 358–382 (DADPRRAPAPAAPAGSRATSPGSGL) is disordered. A compositionally biased stretch (low complexity) spans 365 to 382 (PAPAAPAGSRATSPGSGL).

It localises to the membrane. The polypeptide is Trophoblast glycoprotein-like (TPBGL) (Homo sapiens (Human)).